Reading from the N-terminus, the 281-residue chain is Putative phosphoenolpyruvate synthase regulatory protein (281 aa).

Position 161 to 168 (161 to 168) interacts with ADP; that stretch reads GVSRSGKT.

The protein belongs to the pyruvate, phosphate/water dikinase regulatory protein family. PSRP subfamily.

The catalysed reaction is [pyruvate, water dikinase] + ADP = [pyruvate, water dikinase]-phosphate + AMP + H(+). It catalyses the reaction [pyruvate, water dikinase]-phosphate + phosphate + H(+) = [pyruvate, water dikinase] + diphosphate. In terms of biological role, bifunctional serine/threonine kinase and phosphorylase involved in the regulation of the phosphoenolpyruvate synthase (PEPS) by catalyzing its phosphorylation/dephosphorylation. This is Putative phosphoenolpyruvate synthase regulatory protein from Herminiimonas arsenicoxydans.